We begin with the raw amino-acid sequence, 177 residues long: Isopentenyl-diphosphate Delta-isomerase (177 aa).

2 residues coordinate Mn(2+): histidine 22 and histidine 28. The Nudix hydrolase domain occupies 26 to 160 (LRHMAISVFV…PERFTPWLRI (135 aa)). The active site involves cysteine 62. Histidine 64 is a Mn(2+) binding site. Glutamate 82 contacts Mg(2+). Mn(2+) contacts are provided by glutamate 108 and glutamate 110. Residue glutamate 110 is part of the active site.

It belongs to the IPP isomerase type 1 family. Mg(2+) is required as a cofactor. Requires Mn(2+) as cofactor.

It localises to the cytoplasm. The catalysed reaction is isopentenyl diphosphate = dimethylallyl diphosphate. It functions in the pathway isoprenoid biosynthesis; dimethylallyl diphosphate biosynthesis; dimethylallyl diphosphate from isopentenyl diphosphate: step 1/1. Its pathway is porphyrin-containing compound metabolism; chlorophyll biosynthesis. Functionally, catalyzes the 1,3-allylic rearrangement of the homoallylic substrate isopentenyl (IPP) to its highly electrophilic allylic isomer, dimethylallyl diphosphate (DMAPP). The chain is Isopentenyl-diphosphate Delta-isomerase from Cereibacter sphaeroides (strain ATCC 17029 / ATH 2.4.9) (Rhodobacter sphaeroides).